Consider the following 352-residue polypeptide: Ion-translocating oxidoreductase complex subunit D (352 aa).

Helical transmembrane passes span 20–40 (IMLLVVIAALPGIAAQTWFFG), 42–62 (GTLFQIVLAAITALVAEAIVL), 69–91 (VASHLQDYSALLTGLLLAVSIPP), and 123–143 (PAMIGYVVLLISFPVQMTSWL). Thr187 carries the post-translational modification FMN phosphoryl threonine. The next 5 membrane-spanning stretches (helical) occupy residues 215-235 (LAGVGWQWVNLAWLVGGVFLL), 242-262 (WHIPVSFLLTLALCAALGWLF), 267-287 (LASPQLHLLSGATMLGAFFIL), 301-321 (LIFGALAGVLVWLIRSFGGYP), and 322-342 (DGVAFAVLLANITVPLIDYYT).

It belongs to the NqrB/RnfD family. In terms of assembly, the complex is composed of six subunits: RsxA, RsxB, RsxC, RsxD, RsxE and RsxG. FMN serves as cofactor.

It localises to the cell inner membrane. Functionally, part of a membrane-bound complex that couples electron transfer with translocation of ions across the membrane. Required to maintain the reduced state of SoxR. This Salmonella dublin (strain CT_02021853) protein is Ion-translocating oxidoreductase complex subunit D.